Consider the following 119-residue polypeptide: MTRVPRGYIARRRRTKMRSFASNFRGAHLRLNRVITQQVRRAFVSSHRDRGRQKRDFRRLWITRINAATRVYNVFNSYSKLIHNLSKKELILNRKMLAQVAVSNPNNLYTISNKIRIIN.

This sequence belongs to the bacterial ribosomal protein bL20 family.

It is found in the plastid. The protein resides in the chloroplast. Its function is as follows. Binds directly to 23S ribosomal RNA and is necessary for the in vitro assembly process of the 50S ribosomal subunit. It is not involved in the protein synthesizing functions of that subunit. In Zea mays (Maize), this protein is Large ribosomal subunit protein bL20c (rpl20).